Here is a 338-residue protein sequence, read N- to C-terminus: Malate dehydrogenase, mitochondrial (338 aa).

A mitochondrion-targeting transit peptide spans 1 to 24 (MLSALARPAGAALRRSFSTSXQNN). NAD(+)-binding positions include 31-37 (GASGGIG) and D57. S33 is a glycosylation site (O-linked (GlcNAc) serine). 2 positions are modified to N6-acetyllysine; alternate: K78 and K91. K78 and K91 each carry N6-succinyllysine; alternate. The substrate site is built by R104 and R110. NAD(+) contacts are provided by residues N117 and 140–142 (ISN). N142 lines the substrate pocket. K165 is subject to N6-acetyllysine. Substrate is bound at residue R176. K185 is subject to N6-acetyllysine; alternate. K185 is subject to N6-succinyllysine; alternate. Residue H200 is the Proton acceptor of the active site. K203 is subject to N6-succinyllysine. Residues K215 and K239 each carry the N6-acetyllysine; alternate modification. 2 positions are modified to N6-succinyllysine; alternate: K215 and K239. The residue at position 239 (K239) is an N6-malonyllysine; alternate. S246 bears the Phosphoserine mark. M251 is an NAD(+) binding site. K269 is subject to N6-succinyllysine. N6-acetyllysine; alternate occurs at positions 296, 301, 307, 314, and 324. N6-succinyllysine; alternate is present on residues K296, K301, K307, K314, and K324. K307 is modified (N6-malonyllysine; alternate). Residue S326 is modified to Phosphoserine. An N6-acetyllysine; alternate mark is found at K328, K329, and K335. K328 is subject to N6-succinyllysine; alternate. N6-malonyllysine; alternate is present on K329. An N6-succinyllysine; alternate modification is found at K335.

Belongs to the LDH/MDH superfamily. MDH type 1 family. As to quaternary structure, homodimer. In terms of processing, acetylation is enhanced after treatment either with trichostin A (TCA) or with nicotinamide (NAM) with the appearance of tri- and tetraacetylations. Glucose also increases acetylation.

Its subcellular location is the mitochondrion matrix. The enzyme catalyses (S)-malate + NAD(+) = oxaloacetate + NADH + H(+). Enzyme activity is enhanced by acetylation. The polypeptide is Malate dehydrogenase, mitochondrial (MDH2) (Sus scrofa (Pig)).